The chain runs to 319 residues: Small ribosomal subunit protein mS35 (319 aa).

Residues 1–30 constitute a mitochondrion transit peptide; it reads MKVPLGLWKVSRGNLWSTQKRVLTMSRCLN.

This sequence belongs to the mitochondrion-specific ribosomal protein mS35 family. Component of the mitochondrial small ribosomal subunit (mt-SSU). Mature yeast 74S mitochondrial ribosomes consist of a small (37S) and a large (54S) subunit. The 37S small subunit contains a 15S ribosomal RNA (15S mt-rRNA) and 34 different proteins. The 54S large subunit contains a 21S rRNA (21S mt-rRNA) and 46 different proteins.

The protein resides in the mitochondrion. Functionally, component of the mitochondrial ribosome (mitoribosome), a dedicated translation machinery responsible for the synthesis of mitochondrial genome-encoded proteins, including at least some of the essential transmembrane subunits of the mitochondrial respiratory chain. The mitoribosomes are attached to the mitochondrial inner membrane and translation products are cotranslationally integrated into the membrane. In Saccharomyces cerevisiae (strain ATCC 204508 / S288c) (Baker's yeast), this protein is Small ribosomal subunit protein mS35 (RSM24).